The sequence spans 328 residues: Sin3 histone deacetylase corepressor complex component SDS3 (328 aa).

Residues Met-1–Asp-64 form a disordered region. Ser-2 is subject to N-acetylserine. Residues Ser-2–Leu-170 form a mediates interaction with USP17L2 region. Residues Ala-10–Glu-21 are compositionally biased toward pro residues. 2 stretches are compositionally biased toward acidic residues: residues Tyr-23 to Glu-37 and Ser-45 to Glu-54. Ser-32 and Ser-45 each carry phosphoserine. Thr-49 carries the phosphothreonine modification. The residue at position 53 (Ser-53) is a Phosphoserine. Residues Asp-64–Thr-171 are a coiled coil. Glycyl lysine isopeptide (Lys-Gly) (interchain with G-Cter in SUMO2) cross-links involve residues Lys-69, Lys-178, and Lys-201. Residues Leu-226–Arg-252 are disordered. 3 positions are modified to phosphoserine: Ser-228, Ser-234, and Ser-237. Thr-244 carries the post-translational modification Phosphothreonine.

This sequence belongs to the SDS3 family. In terms of assembly, homodimer. Component of the SIN3 histone deacetylase (HDAC) corepressor complex. Interacts with SIN3A. Interaction with SIN3B enhances the interaction between SIN3B and HDAC1 to form a complex. Interacts with HCFC1. Component of a mSin3A corepressor complex that contains SIN3A, SAP130, SUDS3/SAP45, ARID4B/SAP180, HDAC1 and HDAC2. Interacts with USP17L2; the interaction is direct. Interacts with FOXK2. In terms of processing, polyubiquitinated. 'Lys-63'-polyubiquitinated SUDS3 positively regulates histone deacetylation. Regulated through deubiquitination by USP17L2/USP17 that cleaves 'Lys-63'-linked ubiquitin chains.

The protein localises to the nucleus. Regulatory protein which represses transcription and augments histone deacetylase activity of HDAC1. May have a potential role in tumor suppressor pathways through regulation of apoptosis. May function in the assembly and/or enzymatic activity of the mSin3A corepressor complex or in mediating interactions between the complex and other regulatory complexes. This Bos taurus (Bovine) protein is Sin3 histone deacetylase corepressor complex component SDS3 (SUDS3).